The chain runs to 95 residues: Aspartyl/glutamyl-tRNA(Asn/Gln) amidotransferase subunit C (95 aa).

Belongs to the GatC family. As to quaternary structure, heterotrimer of A, B and C subunits.

It carries out the reaction L-glutamyl-tRNA(Gln) + L-glutamine + ATP + H2O = L-glutaminyl-tRNA(Gln) + L-glutamate + ADP + phosphate + H(+). It catalyses the reaction L-aspartyl-tRNA(Asn) + L-glutamine + ATP + H2O = L-asparaginyl-tRNA(Asn) + L-glutamate + ADP + phosphate + 2 H(+). Allows the formation of correctly charged Asn-tRNA(Asn) or Gln-tRNA(Gln) through the transamidation of misacylated Asp-tRNA(Asn) or Glu-tRNA(Gln) in organisms which lack either or both of asparaginyl-tRNA or glutaminyl-tRNA synthetases. The reaction takes place in the presence of glutamine and ATP through an activated phospho-Asp-tRNA(Asn) or phospho-Glu-tRNA(Gln). The sequence is that of Aspartyl/glutamyl-tRNA(Asn/Gln) amidotransferase subunit C from Nitrobacter hamburgensis (strain DSM 10229 / NCIMB 13809 / X14).